The primary structure comprises 178 residues: Large ribosomal subunit protein uL5 (178 aa).

Belongs to the universal ribosomal protein uL5 family. As to quaternary structure, part of the 50S ribosomal subunit; part of the 5S rRNA/L5/L18/L25 subcomplex. Contacts the 5S rRNA and the P site tRNA. Forms a bridge to the 30S subunit in the 70S ribosome.

In terms of biological role, this is one of the proteins that bind and probably mediate the attachment of the 5S RNA into the large ribosomal subunit, where it forms part of the central protuberance. In the 70S ribosome it contacts protein S13 of the 30S subunit (bridge B1b), connecting the 2 subunits; this bridge is implicated in subunit movement. Contacts the P site tRNA; the 5S rRNA and some of its associated proteins might help stabilize positioning of ribosome-bound tRNAs. This chain is Large ribosomal subunit protein uL5, found in Wolbachia pipientis subsp. Culex pipiens (strain wPip).